A 682-amino-acid polypeptide reads, in one-letter code: Zinc finger protein 16 (682 aa).

2 stretches are compositionally biased toward basic and acidic residues: residues 1–10 (MPSLRTRREE) and 113–125 (VSER…EGRR). Disordered stretches follow at residues 1–33 (MPSL…HVSD) and 112–134 (DVSE…SQEG). Positions 62-210 (YQQPDCDTRT…GVPTAESPLI (149 aa)) are necessary for transcription activation. A C2H2-type 1; degenerate zinc finger spans residues 209-231 (LICNECGKTFQGNPDLIQCQIVH). The segment at 237 to 259 (FMCDDCGKTFSQNSVLKNHHRSH) adopts a C2H2-type 2; degenerate zinc-finger fold. A Glycyl lysine isopeptide (Lys-Gly) (interchain with G-Cter in SUMO2) cross-link involves residue Lys-253. 8 C2H2-type zinc fingers span residues 265 to 287 (YQCS…QSHH), 293 to 315 (YMCN…QKSH), 321 to 343 (YECN…QRIH), 349 to 371 (YVCS…HRTH), 377 to 399 (FECG…QRVH), 405 to 427 (YECN…HRVH), 433 to 455 (YKCS…RRIH), and 461 to 483 (HVCN…QIIH). 2 required for nuclear localization regions span residues 268–393 (SECG…AHLR) and 341–373 (RIHS…THTG). The segment at 473–503 (SSVLRKHQIIHTGEKPYRCSVCGKAFSHSSA) is required for nuclear localization. The residue at position 487 (Lys-487) is an N6-acetyllysine. C2H2-type zinc fingers lie at residues 489–511 (YRCS…QGVH), 517–539 (YACH…QRVH), 545–567 (YECT…QRIH), 573–595 (HECN…QKVH), 601–623 (YTCV…QIIH), 629–651 (YKCS…QRIH), and 657–679 (YDCA…QLIH).

This sequence belongs to the krueppel C2H2-type zinc-finger protein family. Interacts with INCA1; the interaction inhibits INCA1 activity and induces the cell cycle process.

The protein localises to the nucleus. Functionally, acts as a transcriptional activator. Promotes cell proliferation by facilitating the cell cycle phase transition from the S to G2/M phase. Involved in both the hemin- and phorbol myristate acetate (PMA)-induced erythroid and megakaryocytic differentiation, respectively. Also plays a role as an inhibitor of cell apoptosis. The chain is Zinc finger protein 16 (ZNF16) from Gorilla gorilla gorilla (Western lowland gorilla).